A 523-amino-acid polypeptide reads, in one-letter code: Tyrosine ammonia-lyase (523 aa).

Tyr-60 (proton donor/acceptor) is an active-site residue. His-89 contributes to the substrate binding site. The 5-imidazolinone (Ala-Gly) cross-link spans 149–151 (ASG). Ser-150 carries the post-translational modification 2,3-didehydroalanine (Ser). Substrate contacts are provided by residues Arg-303 and 432–436 (NAANQ).

The protein belongs to the PAL/histidase family. In terms of assembly, homotetramer. In terms of processing, contains an active site 4-methylidene-imidazol-5-one (MIO), which is formed autocatalytically by cyclization and dehydration of residues Ala-Ser-Gly.

It carries out the reaction L-tyrosine = (E)-4-coumarate + NH4(+). In terms of biological role, catalyzes the non-oxidative deamination of L-tyrosine. Has very low phenylalanine ammonia-lyase activity (in vitro). This Cereibacter sphaeroides (strain ATCC 17023 / DSM 158 / JCM 6121 / CCUG 31486 / LMG 2827 / NBRC 12203 / NCIMB 8253 / ATH 2.4.1.) (Rhodobacter sphaeroides) protein is Tyrosine ammonia-lyase (hutH).